Here is a 123-residue protein sequence, read N- to C-terminus: uncharacterized protein (123 aa).

A helical transmembrane segment spans residues 14-34; the sequence is VVLKITAVVCSVFSIRVLILA.

Its subcellular location is the membrane. This is an uncharacterized protein from Saccharomyces cerevisiae (strain ATCC 204508 / S288c) (Baker's yeast).